Reading from the N-terminus, the 188-residue chain is Small ribosomal subunit protein bS18c (188 aa).

Low complexity predominate over residues 1–19 (MNNQSFNNFSQVNSNSSFF). The interval 1-79 (MNNQSFNNFS…TSNKRKVLSV (79 aa)) is disordered. A compositionally biased stretch (polar residues) spans 25 to 71 (NLQNTNLEMTNGTNPPSSFSKQTPQKRQSFGTNTNFSKGNSSRGSTS).

The protein belongs to the bacterial ribosomal protein bS18 family. In terms of assembly, part of the 30S ribosomal subunit.

The protein resides in the plastid. It is found in the chloroplast. In Tetradesmus obliquus (Green alga), this protein is Small ribosomal subunit protein bS18c.